A 310-amino-acid chain; its full sequence is Sporozoite surface protein P36 (310 aa).

An N-terminal signal peptide occupies residues 1–24; sequence MRKALYSLLFYMCICLYIYTPVFM. 2 consecutive 6-Cys domains span residues 25–157 and 168–309; these read ANLK…IKKT and YIKG…STKA. 6 cysteine pairs are disulfide-bonded: cysteine 38-cysteine 48, cysteine 62-cysteine 137, cysteine 80-cysteine 135, cysteine 172-cysteine 196, cysteine 210-cysteine 291, and cysteine 227-cysteine 289. N-linked (GlcNAc...) asparagine glycosylation is found at asparagine 72, asparagine 114, and asparagine 118. A glycan (N-linked (GlcNAc...) asparagine) is linked at asparagine 290.

Its subcellular location is the cell surface. It localises to the cell membrane. In terms of biological role, involved in sporozoite infection of hepatocytes and replication therein. This is Sporozoite surface protein P36 (P36) from Plasmodium yoelii yoelii.